The primary structure comprises 164 residues: Phosphopantetheine adenylyltransferase (164 aa).

Residue serine 9 participates in substrate binding. Residues 9–10 and histidine 17 contribute to the ATP site; that span reads SF. Substrate is bound by residues lysine 41, leucine 78, and arginine 92. Residues 93–95, glutamate 103, and 128–134 each bind ATP; these read GLR and GRVITST.

It belongs to the bacterial CoaD family. In terms of assembly, homohexamer. Requires Mg(2+) as cofactor.

The protein resides in the cytoplasm. It catalyses the reaction (R)-4'-phosphopantetheine + ATP + H(+) = 3'-dephospho-CoA + diphosphate. The protein operates within cofactor biosynthesis; coenzyme A biosynthesis; CoA from (R)-pantothenate: step 4/5. Functionally, reversibly transfers an adenylyl group from ATP to 4'-phosphopantetheine, yielding dephospho-CoA (dPCoA) and pyrophosphate. This is Phosphopantetheine adenylyltransferase from Bartonella bacilliformis (strain ATCC 35685 / KC583 / Herrer 020/F12,63).